Reading from the N-terminus, the 915-residue chain is Protein inturned (915 aa).

Residues 88–144 form a disordered region; that stretch reads NAKRQANSSNKSEAKLKKLTKILRRKRRPSQRKAEGKDSSQRPASILKNQAGQRPGV. The segment covering 104–118 has biased composition (basic residues); that stretch reads KKLTKILRRKRRPSQ. Positions 128 to 139 are enriched in polar residues; that stretch reads QRPASILKNQAG. In terms of domain architecture, PDZ spans 165–253; sequence SVSSSSADRG…PMQVRLTLET (89 aa). Positions 688–738 are disordered; it reads GIRGRRASPQRSQSDSGSEGHADGTPASVARRDSLGSGGSDGSLGSAGFLK.

This sequence belongs to the inturned family.

The protein resides in the cytoplasm. The protein localises to the cell surface. It localises to the cytoskeleton. Its subcellular location is the cilium basal body. Functionally, plays a key role in ciliogenesis and embryonic development. Regulator of cilia formation by controlling the organization of the apical actin cytoskeleton and the positioning of the basal bodies at the apical cell surface, which in turn is essential for the normal orientation of elongating ciliary microtubules. Plays a key role in definition of cell polarity via its role in ciliogenesis but not via conversion extension. Has an indirect effect on hedgehog signaling. This Danio rerio (Zebrafish) protein is Protein inturned (intu).